A 393-amino-acid chain; its full sequence is NADH-quinone oxidoreductase subunit D (393 aa).

The protein belongs to the complex I 49 kDa subunit family. In terms of assembly, NDH-1 is composed of 14 different subunits. Subunits NuoB, C, D, E, F, and G constitute the peripheral sector of the complex.

It localises to the cell inner membrane. It carries out the reaction a quinone + NADH + 5 H(+)(in) = a quinol + NAD(+) + 4 H(+)(out). Functionally, NDH-1 shuttles electrons from NADH, via FMN and iron-sulfur (Fe-S) centers, to quinones in the respiratory chain. The immediate electron acceptor for the enzyme in this species is believed to be ubiquinone. Couples the redox reaction to proton translocation (for every two electrons transferred, four hydrogen ions are translocated across the cytoplasmic membrane), and thus conserves the redox energy in a proton gradient. The polypeptide is NADH-quinone oxidoreductase subunit D (Ehrlichia canis (strain Jake)).